The primary structure comprises 166 residues: MRLILLSGLLLLGIFLANGHEQDPDGKLLNSLIDALMHLQREFAKLRGAFLTVYKARSFGNGSERLYVTNKEIKNFEALRQICEQAGGHIPSPQLENQNKAFANVLERHNKEAYLVVGDSANFTNWAAGEPNKAAGACVKADTHGSWHSTSCDDNLLVVCEFYFIL.

The first 19 residues, 1 to 19 (MRLILLSGLLLLGIFLANG), serve as a signal peptide directing secretion. The 116-residue stretch at 46–161 (LRGAFLTVYK…CDDNLLVVCE (116 aa)) folds into the C-type lectin domain. Residues N61 and N122 are each glycosylated (N-linked (GlcNAc...) asparagine). Intrachain disulfides connect C83–C160 and C138–C152.

It belongs to the alpha-type phospholipase A2 inhibitor family. As to quaternary structure, homotrimer; non-covalently linked. As to expression, expressed by the liver.

It is found in the secreted. This phospholipase A2 inhibitor binds directly phospholipase A2 in the presence or absence of calcium. In Bothrops alternatus (Urutu), this protein is Phospholipase A2 inhibitor.